The sequence spans 500 residues: MMSNLIILPMLLPFVCALILVFTKNKNRISKILSITTMIVNTMISIALLIYVVNHKPITLDFGGWKAPFGIQFLGDSLSLLMVSVSSFVVTLIMAYGFGRGEKRVNRFHLPTFILLLTVGVIGSFLTSDLFNLYVMFEIMLLASFVLVTLGQSVEQLRAAIVYVVLNILGSWLLLLGIGMLYKTVGTLNFSHLAMRLNHMENNQTITMISLVFLVAFSSKAALVIFMWLPKAYAVLNTELAALFAALMTKVGAYALIRFFTLLFDHHPSVTHTLLVFMACITMIIGAFGVIAYKDIKKIAAYQVILSIGFIILGLGSHTISGVNGAIFYLANDIIVKTLLFFVIGSLVYMSGYRNYQYLSGLAKREPFFGVAFVVVIFAIGGVPPFSGFPGKVLIFQGAITNGNYIGLALMIVTSLIAMYSLFRVMFIMYFGDADGEQVQFRPLPIYRKGLLSVLVVVVLAMGIAAPVVLKVTEDATNLNMKEDVFQKNVNTHLKEVNHK.

Helical transmembrane passes span methionine 2–phenylalanine 22, isoleucine 32–valine 52, leucine 78–phenylalanine 98, phenylalanine 108–serine 128, leucine 130–leucine 150, isoleucine 161–leucine 181, isoleucine 209–leucine 229, leucine 240–phenylalanine 260, threonine 273–tyrosine 293, isoleucine 308–phenylalanine 328, leucine 330–methionine 350, phenylalanine 368–glycine 388, glycine 403–phenylalanine 423, and glycine 450–leucine 470.

It belongs to the CPA3 antiporters (TC 2.A.63) subunit D family. In terms of assembly, may form a heterooligomeric complex that consists of seven subunits: mnhA2, mnhB2, mnhC2, mnhD2, mnhE2, mnhF2 and mnhG2.

The protein resides in the cell membrane. The protein is Putative antiporter subunit mnhD2 (mnhD2) of Staphylococcus epidermidis (strain ATCC 12228 / FDA PCI 1200).